The primary structure comprises 279 residues: MTADLSSPRRARRSPSSYLGALVGKTIRRSIPTAIAFFVLLGIWQLLCSGENAACRPIQVVQESWDLIIDPFYRGSGTDQGLFWQIAASLQRVAVGYLMAAIAGIALGILIGVSVLMFQALDPIFQVLRTVPPLAWLPISLAAFRDSQPAAIFVIFITAIWPIIINTAVGVQNIPQDYNNVARVLKLSRLDYFLKVLLPATVPYIFTGLKIAIGLSWLAIVAAEMLTGGVGIGFFIWDAYNSGSNSEVILAIIYVGLVGLLLNALVGFIASRVVPDEQK.

In terms of domain architecture, ABC transmembrane type-1 spans 86 to 270 (IAASLQRVAV…LLNALVGFIA (185 aa)). A run of 6 helical transmembrane segments spans residues 98–118 (LMAA…VLMF), 124–144 (IFQV…LAAF), 151–171 (AIFV…AVGV), 196–216 (VLLP…IGLS), 217–237 (WLAI…FFIW), and 249–269 (ILAI…VGFI).

The protein belongs to the binding-protein-dependent transport system permease family. CysTW subfamily. In terms of assembly, the complex is composed of two ATP-binding proteins (NrtC and NrtD), two transmembrane proteins (NrtB) and a solute-binding protein (NrtA).

It is found in the cell inner membrane. Functionally, part of the ABC transporter complex NrtABCD involved in nitrate uptake. The complex is probably also involved in nitrite transport. Probably responsible for the translocation of the substrate across the membrane. In Leptolyngbya laminosa (Phormidium laminosum), this protein is Nitrate import permease protein NrtB.